Consider the following 137-residue polypeptide: Cellular retinoic acid-binding protein 1 (137 aa).

The Nuclear localization signal motif lies at 21–31 (KALGVNAMLRK). Residue 132–134 (RIY) participates in all-trans-retinoate binding.

This sequence belongs to the calycin superfamily. Fatty-acid binding protein (FABP) family.

It is found in the cytoplasm. In terms of biological role, cytosolic CRABPs may regulate the access of retinoic acid to the nuclear retinoic acid receptors. This is Cellular retinoic acid-binding protein 1 (Crabp1) from Mus musculus (Mouse).